The primary structure comprises 263 residues: Endonuclease 8 (263 aa).

The active-site Schiff-base intermediate with DNA is Pro2. Catalysis depends on Glu3, which acts as the Proton donor. Lys53 (proton donor; for beta-elimination activity) is an active-site residue. DNA is bound by residues Gln70, Arg125, and Asn169. The FPG-type zinc finger occupies 229-263 (KVFHRDGELCERCGGIIEKTTLSSRPFYWCPGCQH). Arg253 acts as the Proton donor; for delta-elimination activity in catalysis.

It belongs to the FPG family. Zn(2+) is required as a cofactor.

The catalysed reaction is 2'-deoxyribonucleotide-(2'-deoxyribose 5'-phosphate)-2'-deoxyribonucleotide-DNA = a 3'-end 2'-deoxyribonucleotide-(2,3-dehydro-2,3-deoxyribose 5'-phosphate)-DNA + a 5'-end 5'-phospho-2'-deoxyribonucleoside-DNA + H(+). In terms of biological role, involved in base excision repair of DNA damaged by oxidation or by mutagenic agents. Acts as a DNA glycosylase that recognizes and removes damaged bases. Has a preference for oxidized pyrimidines, such as thymine glycol, 5,6-dihydrouracil and 5,6-dihydrothymine. Has AP (apurinic/apyrimidinic) lyase activity and introduces nicks in the DNA strand. Cleaves the DNA backbone by beta-delta elimination to generate a single-strand break at the site of the removed base with both 3'- and 5'-phosphates. This Escherichia coli (strain 55989 / EAEC) protein is Endonuclease 8.